The sequence spans 294 residues: 4-diphosphocytidyl-2-C-methyl-D-erythritol kinase (294 aa).

Lys19 is an active-site residue. 106 to 116 is an ATP binding site; sequence PVASGIGGGSA. The active site involves Asp148.

The protein belongs to the GHMP kinase family. IspE subfamily.

It catalyses the reaction 4-CDP-2-C-methyl-D-erythritol + ATP = 4-CDP-2-C-methyl-D-erythritol 2-phosphate + ADP + H(+). The protein operates within isoprenoid biosynthesis; isopentenyl diphosphate biosynthesis via DXP pathway; isopentenyl diphosphate from 1-deoxy-D-xylulose 5-phosphate: step 3/6. Catalyzes the phosphorylation of the position 2 hydroxy group of 4-diphosphocytidyl-2C-methyl-D-erythritol. The polypeptide is 4-diphosphocytidyl-2-C-methyl-D-erythritol kinase (Rhizobium etli (strain ATCC 51251 / DSM 11541 / JCM 21823 / NBRC 15573 / CFN 42)).